Here is a 461-residue protein sequence, read N- to C-terminus: Argininosuccinate lyase (461 aa).

The protein belongs to the lyase 1 family. Argininosuccinate lyase subfamily.

The protein localises to the cytoplasm. It catalyses the reaction 2-(N(omega)-L-arginino)succinate = fumarate + L-arginine. It participates in amino-acid biosynthesis; L-arginine biosynthesis; L-arginine from L-ornithine and carbamoyl phosphate: step 3/3. The polypeptide is Argininosuccinate lyase (Bacillus subtilis (strain 168)).